A 201-amino-acid polypeptide reads, in one-letter code: Dephospho-CoA kinase (201 aa).

Positions 4–201 (AFFVTASIAC…VIQEISKGKM (198 aa)) constitute a DPCK domain. Residue 12–17 (ACGKST) coordinates ATP.

It belongs to the CoaE family.

The protein resides in the cytoplasm. It catalyses the reaction 3'-dephospho-CoA + ATP = ADP + CoA + H(+). It participates in cofactor biosynthesis; coenzyme A biosynthesis; CoA from (R)-pantothenate: step 5/5. Catalyzes the phosphorylation of the 3'-hydroxyl group of dephosphocoenzyme A to form coenzyme A. The chain is Dephospho-CoA kinase from Campylobacter jejuni (strain RM1221).